Reading from the N-terminus, the 427-residue chain is 3-phosphoshikimate 1-carboxyvinyltransferase (427 aa).

3 residues coordinate 3-phosphoshikimate: K20, S21, and R25. K20 provides a ligand contact to phosphoenolpyruvate. 2 residues coordinate phosphoenolpyruvate: G92 and R120. The 3-phosphoshikimate site is built by S166, Q168, D312, and K339. Q168 serves as a coordination point for phosphoenolpyruvate. The active-site Proton acceptor is the D312. Phosphoenolpyruvate is bound by residues R343 and R385.

It belongs to the EPSP synthase family. In terms of assembly, monomer.

It is found in the cytoplasm. It catalyses the reaction 3-phosphoshikimate + phosphoenolpyruvate = 5-O-(1-carboxyvinyl)-3-phosphoshikimate + phosphate. It participates in metabolic intermediate biosynthesis; chorismate biosynthesis; chorismate from D-erythrose 4-phosphate and phosphoenolpyruvate: step 6/7. Its function is as follows. Catalyzes the transfer of the enolpyruvyl moiety of phosphoenolpyruvate (PEP) to the 5-hydroxyl of shikimate-3-phosphate (S3P) to produce enolpyruvyl shikimate-3-phosphate and inorganic phosphate. The polypeptide is 3-phosphoshikimate 1-carboxyvinyltransferase (Streptococcus pneumoniae serotype 2 (strain D39 / NCTC 7466)).